The primary structure comprises 103 residues: Protein Rev (103 aa).

Residue Ser-5 is modified to Phosphoserine; by host CK2. The homomultimerization stretch occupies residues 18-26; that stretch reads VIKILYQSN. The segment covering 25–34 has biased composition (polar residues); the sequence is SNPYPNDSGT. Disordered stretches follow at residues 25–48 and 66–103; these read SNPYPNDSGTRQARKNRRRRWRAR and GLQEPSTLPLPPLDRLSLNPEEDLGTSETEHPQGTATT. A Nuclear localization signal and RNA-binding (RRE) motif is present at residues 34–50; that stretch reads TRQARKNRRRRWRARQR. Basic residues predominate over residues 36–48; that stretch reads QARKNRRRRWRAR. The Nuclear export signal and binding to XPO1 motif lies at 73-84; sequence LPLPPLDRLSLN. Position 92 is a phosphoserine; by host (Ser-92).

The protein belongs to the HIV-1 REV protein family. Homomultimer; when bound to the RRE. Multimeric assembly is essential for activity and may involve XPO1. Binds to human KPNB1, XPO1, TNPO1, RANBP5 and IPO7. Interacts with the viral Integrase. Interacts with human KHDRBS1. Interacts with human NAP1; this interaction decreases Rev multimerization and stimulates its activity. Interacts with human DEAD-box helicases DDX3 and DDX24; these interactions may serve for viral RNA export to the cytoplasm and packaging, respectively. Interacts with human PSIP1; this interaction may inhibit HIV-1 DNA integration by promoting dissociation of the Integrase-LEDGF/p75 complex. In terms of processing, asymmetrically arginine dimethylated at one site by host PRMT6. Methylation impairs the RNA-binding activity and export of viral RNA from the nucleus to the cytoplasm. Phosphorylated by protein kinase CK2. Presence of, and maybe binding to the N-terminus of the regulatory beta subunit of CK2 is necessary for CK2-mediated Rev's phosphorylation.

It is found in the host nucleus. Its subcellular location is the host nucleolus. The protein resides in the host cytoplasm. Functionally, escorts unspliced or incompletely spliced viral pre-mRNAs (late transcripts) out of the nucleus of infected cells. These pre-mRNAs carry a recognition sequence called Rev responsive element (RRE) located in the env gene, that is not present in fully spliced viral mRNAs (early transcripts). This function is essential since most viral proteins are translated from unspliced or partially spliced pre-mRNAs which cannot exit the nucleus by the pathway used by fully processed cellular mRNAs. Rev itself is translated from a fully spliced mRNA that readily exits the nucleus. Rev's nuclear localization signal (NLS) binds directly to KPNB1/Importin beta-1 without previous binding to KPNA1/Importin alpha-1. KPNB1 binds to the GDP bound form of RAN (Ran-GDP) and targets Rev to the nucleus. In the nucleus, the conversion from Ran-GDP to Ran-GTP dissociates Rev from KPNB1 and allows Rev's binding to the RRE in viral pre-mRNAs. Rev multimerization on the RRE via cooperative assembly exposes its nuclear export signal (NES) to the surface. Rev can then form a complex with XPO1/CRM1 and Ran-GTP, leading to nuclear export of the complex. Conversion from Ran-GTP to Ran-GDP mediates dissociation of the Rev/RRE/XPO1/RAN complex, so that Rev can return to the nucleus for a subsequent round of export. Beside KPNB1, also seems to interact with TNPO1/Transportin-1, RANBP5/IPO5 and IPO7/RANBP7 for nuclear import. The nucleoporin-like HRB/RIP is an essential cofactor that probably indirectly interacts with Rev to release HIV RNAs from the perinuclear region to the cytoplasm. This chain is Protein Rev, found in Pan troglodytes (Chimpanzee).